Here is a 439-residue protein sequence, read N- to C-terminus: Omega-aminotransferase (439 aa).

Gly-112–Ser-113 provides a ligand contact to pyridoxal 5'-phosphate. Lys-281 is modified (N6-(pyridoxal phosphate)lysine). Thr-318 is a binding site for pyridoxal 5'-phosphate.

This sequence belongs to the class-III pyridoxal-phosphate-dependent aminotransferase family. As to quaternary structure, homotetramer. Requires pyridoxal 5'-phosphate as cofactor.

It catalyses the reaction 3-oxopropanoate + L-alanine = beta-alanine + pyruvate. The enzyme catalyses 3-aminobutanoate + pyruvate = acetoacetate + L-alanine. The catalysed reaction is benzylamine + pyruvate = benzaldehyde + L-alanine. It carries out the reaction (S)-1-phenylethylamine + pyruvate = acetophenone + L-alanine. It catalyses the reaction 2-phenylethylamine + pyruvate = 2-phenylacetaldehyde + L-alanine. The enzyme catalyses 1-phenylpropylamine + pyruvate = 1-phenylpropan-1-one + L-alanine. The catalysed reaction is 3-phenylpropylamine + pyruvate = 3-phenylpropanal + L-alanine. In terms of biological role, aminotransferase that can use beta-amino acids, aliphatic amines, or aromatic amines as amino donors, and pyruvate as amino acceptor. Shows high activity for short-chain beta-amino acids, with the highest activity for 3-aminobutanoate and beta-alanine in vitro. Displays higher activity toward aromatic amines than aliphatic amines. May be involved in beta-alanine biosynthesis and/or degradation. This Caulobacter vibrioides (strain ATCC 19089 / CIP 103742 / CB 15) (Caulobacter crescentus) protein is Omega-aminotransferase.